The primary structure comprises 247 residues: 2-dehydro-3-deoxy-phosphogluconate aldolase (247 aa).

The protein belongs to the DagF family.

The catalysed reaction is 2-dehydro-3-deoxy-6-phospho-D-gluconate = D-glyceraldehyde 3-phosphate + pyruvate. Involved in the catabolism of D-glucosaminate. Catalyzes the conversion of keto-3-deoxygluconate 6-phosphate (KDGP) to yield pyruvate and glyceraldehyde-3-phosphate. This is 2-dehydro-3-deoxy-phosphogluconate aldolase from Salmonella typhimurium (strain 14028s / SGSC 2262).